We begin with the raw amino-acid sequence, 226 residues long: ATP-dependent Clp protease proteolytic subunit 2 (226 aa).

Ser-118 functions as the Nucleophile in the catalytic mechanism. The active site involves His-143.

The protein belongs to the peptidase S14 family. In terms of assembly, fourteen ClpP subunits assemble into 2 heptameric rings which stack back to back to give a disk-like structure with a central cavity, resembling the structure of eukaryotic proteasomes.

Its subcellular location is the cytoplasm. It carries out the reaction Hydrolysis of proteins to small peptides in the presence of ATP and magnesium. alpha-casein is the usual test substrate. In the absence of ATP, only oligopeptides shorter than five residues are hydrolyzed (such as succinyl-Leu-Tyr-|-NHMec, and Leu-Tyr-Leu-|-Tyr-Trp, in which cleavage of the -Tyr-|-Leu- and -Tyr-|-Trp bonds also occurs).. Cleaves peptides in various proteins in a process that requires ATP hydrolysis. Has a chymotrypsin-like activity. Plays a major role in the degradation of misfolded proteins. The polypeptide is ATP-dependent Clp protease proteolytic subunit 2 (Synechocystis sp. (strain ATCC 27184 / PCC 6803 / Kazusa)).